A 441-amino-acid polypeptide reads, in one-letter code: Arginine biosynthesis bifunctional protein ArgJ, mitochondrial (441 aa).

The N-terminal 8 residues, 1–8 (MRISSTLL), are a transit peptide targeting the mitochondrion. Substrate is bound by residues Thr-177, Lys-204, Thr-215, Glu-301, Asn-436, and Ser-441. Thr-215 acts as the Nucleophile in catalysis.

The protein belongs to the ArgJ family. Heterodimer of an alpha and a beta chain. The alpha and beta chains are autoproteolytically processed from a single precursor protein within the mitochondrion.

It is found in the mitochondrion matrix. The enzyme catalyses N(2)-acetyl-L-ornithine + L-glutamate = N-acetyl-L-glutamate + L-ornithine. The catalysed reaction is L-glutamate + acetyl-CoA = N-acetyl-L-glutamate + CoA + H(+). The protein operates within amino-acid biosynthesis; L-arginine biosynthesis; L-ornithine and N-acetyl-L-glutamate from L-glutamate and N(2)-acetyl-L-ornithine (cyclic): step 1/1. Its pathway is amino-acid biosynthesis; L-arginine biosynthesis; N(2)-acetyl-L-ornithine from L-glutamate: step 1/4. With respect to regulation, inhibited by ornithine. Functionally, catalyzes two activities which are involved in the cyclic version of arginine biosynthesis: the synthesis of acetylglutamate from glutamate and acetyl-CoA, and of ornithine by transacetylation between acetylornithine and glutamate. This is Arginine biosynthesis bifunctional protein ArgJ, mitochondrial from Saccharomyces cerevisiae (strain ATCC 204508 / S288c) (Baker's yeast).